A 95-amino-acid chain; its full sequence is Large ribosomal subunit protein uL23 (95 aa).

This sequence belongs to the universal ribosomal protein uL23 family. In terms of assembly, part of the 50S ribosomal subunit. Contacts protein L29, and trigger factor when it is bound to the ribosome.

One of the early assembly proteins it binds 23S rRNA. One of the proteins that surrounds the polypeptide exit tunnel on the outside of the ribosome. Forms the main docking site for trigger factor binding to the ribosome. This chain is Large ribosomal subunit protein uL23, found in Pediococcus pentosaceus (strain ATCC 25745 / CCUG 21536 / LMG 10740 / 183-1w).